We begin with the raw amino-acid sequence, 70 residues long: MKARELQELRKSSPQELQSKLNDLKAELFNLRFQLATGQLENPMRIREVKKSIAQIKTILREEEIRAYQQ.

This sequence belongs to the universal ribosomal protein uL29 family.

In Clostridium botulinum (strain ATCC 19397 / Type A), this protein is Large ribosomal subunit protein uL29.